Here is a 2131-residue protein sequence, read N- to C-terminus: Protein Ycf2 (2131 aa).

Residue 1466-1473 participates in ATP binding; it reads GSIGTGRS.

It belongs to the Ycf2 family.

It is found in the plastid. Its subcellular location is the chloroplast stroma. In terms of biological role, probable ATPase of unknown function. Its presence in a non-photosynthetic plant (Epifagus virginiana) and experiments in tobacco indicate that it has an essential function which is probably not related to photosynthesis. The chain is Protein Ycf2 from Helianthus annuus (Common sunflower).